We begin with the raw amino-acid sequence, 174 residues long: UPF0340 protein SAB1998c (174 aa).

Belongs to the UPF0340 family.

The chain is UPF0340 protein SAB1998c from Staphylococcus aureus (strain bovine RF122 / ET3-1).